A 151-amino-acid chain; its full sequence is Large ribosomal subunit protein uL15 (151 aa).

The span at 1–14 (MRREKKSRAYRGSR) shows a compositional bias: basic residues. The interval 1 to 33 (MRREKKSRAYRGSRTHGWGRVGQHRKSGSRGGR) is disordered.

Belongs to the universal ribosomal protein uL15 family. As to quaternary structure, part of the 50S ribosomal subunit.

Functionally, binds to the 23S rRNA. The protein is Large ribosomal subunit protein uL15 of Thermofilum pendens (strain DSM 2475 / Hrk 5).